We begin with the raw amino-acid sequence, 1063 residues long: Cellulose synthase A catalytic subunit 7 [UDP-forming] (1063 aa).

The Cytoplasmic portion of the chain corresponds to 1 to 213 (MDTASVTGGE…IPSSKINPYR (213 aa)). Zn(2+) is bound by residues Cys18, Cys21, Cys37, Cys40, Cys45, Cys48, Cys60, and Cys63. The segment at 18-64 (CRVCGEEVAAREDGKPFVACAECGFPVCKPCYEYERSEGTQCCPQCN) adopts an RING-type; degenerate zinc-finger fold. Positions 116–154 (NGEQPAQKWRPGGPALSSFTGSVAGKDLEQEREMEGGME) are disordered. Basic and acidic residues predominate over residues 141-154 (KDLEQEREMEGGME). Residues 214 to 234 (IVIVLRLVVLCFFLKFRITTP) traverse the membrane as a helical segment. Topologically, residues 235–237 (AMD) are extracellular. A helical transmembrane segment spans residues 238–258 (AVPLWLASVICELWFALSWIL). Topologically, residues 259 to 845 (DQLPKWSPVT…TNTIVYPFTS (587 aa)) are cytoplasmic. 4 residues coordinate UDP-alpha-D-glucose: Ser297, Lys303, Glu304, and Asp333. Residue Asp333 is part of the active site. Residues 387-414 (VKERRAMKREYEEFKVRINALVAKAQKK) adopt a coiled-coil conformation. Lys474 serves as a coordination point for UDP-alpha-D-glucose. Lys475 and Asp499 together coordinate Mn(2+). The active site involves Asp762. The chain crosses the membrane as a helical span at residues 846–866 (IPLLAYCTIPAVCLLTGKFII). Residues 867–871 (PTLNN) lie on the Extracellular side of the membrane. Residues 872–892 (LASIWFIALFLSIIATGVLEL) form a helical membrane-spanning segment. The Cytoplasmic portion of the chain corresponds to 893 to 907 (RWSGVSIEDWWRNEQ). The chain crosses the membrane as a helical span at residues 908–928 (FWVIGGVSAHLFAVFQGLLKV). Residues 929 to 959 (LGGVDTNFTVTSKAAADETDAFGELYLFKWT) lie on the Extracellular side of the membrane. Asn935 carries an N-linked (GlcNAc...) asparagine glycan. Residues 960 to 980 (TLLVPPTTLIIINMVGIVAGV) traverse the membrane as a helical segment. At 981 to 991 (SDAVNNGYGSW) the chain is on the cytoplasmic side. A helical transmembrane segment spans residues 992-1012 (GPLFGKLFFSFWVILHLYPFL). Residues 1013–1021 (KGLMGRQNR) lie on the Extracellular side of the membrane. A helical transmembrane segment spans residues 1022-1042 (TPTIVVLWSILLASIFSLVWV). Residues 1043-1063 (RIDPFIPKPKGPVLKPCGVSC) are Cytoplasmic-facing.

It belongs to the glycosyltransferase 2 family. Plant cellulose synthase subfamily. The cofactor is Mn(2+). Zn(2+) serves as cofactor.

The protein localises to the cell membrane. The catalysed reaction is [(1-&gt;4)-beta-D-glucosyl](n) + UDP-alpha-D-glucose = [(1-&gt;4)-beta-D-glucosyl](n+1) + UDP + H(+). The protein operates within glycan metabolism; plant cellulose biosynthesis. In terms of biological role, catalytic subunit of cellulose synthase terminal complexes ('rosettes'), required for beta-1,4-glucan microfibril crystallization, a major mechanism of the cell wall formation. Involved in the secondary cell wall formation. This Oryza sativa subsp. japonica (Rice) protein is Cellulose synthase A catalytic subunit 7 [UDP-forming] (CESA7).